A 582-amino-acid polypeptide reads, in one-letter code: Hydrazine dehydrogenase (582 aa).

A signal peptide spans 1–32; that stretch reads MRKFLKVTLASALIGCGVIGTVSSLMVKEAKA. Heme c is bound by residues C121, C124, H125, H141, C151, C154, H155, H159, C170, C175, H176, H191, C216, C219, H220, C227, C230, H231, H234, C247, C250, H251, H267, C297, C300, H301, H306, C342, C345, H346, H454, and Y462. Residues 561 to 582 are disordered; that stretch reads GSHSAHHHESGHDPAARSMKEH. The span at 567–582 shows a compositional bias: basic and acidic residues; the sequence is HHESGHDPAARSMKEH.

Homotrimer; subunits are linked by two covalent bonds between Tyr-462 of one subunit and heme P460 of an adjacent subunit. May form 24-mer of an octamer of trimers. It depends on heme c as a cofactor.

It is found in the anammoxosome. It carries out the reaction hydrazine + 4 Fe(III)-[cytochrome c] = N2 + 4 Fe(II)-[cytochrome c] + 4 H(+). It participates in nitrogen metabolism. Is strongly and competitively inhibited by NO and hydroxylamine. In terms of biological role, catalyzes the four-electron oxidation of hydrazine to N2. The electrons derived from hydrazine oxidation may be transferred to the quinone pool and exploited to promote the generation of proton-motive force (pmf) across the anammoxosome membrane. Is involved in anaerobic ammonium oxidation (anammox), a biological process in which nitrite is used as the electron acceptor in the conversion of ammonium to dinitrogen gas (N2) and water; this bacterial process has a major role in the Earth's nitrogen cycle and has been estimated to synthesize up to 50% of the dinitrogen gas emitted into our atmosphere from the oceans. Cannot oxidize hydroxylamine to NO. This chain is Hydrazine dehydrogenase, found in Kuenenia stuttgartiensis.